A 92-amino-acid chain; its full sequence is Small ribosomal subunit protein uS19 (92 aa).

Belongs to the universal ribosomal protein uS19 family. Part of the 30S ribosomal subunit.

In terms of biological role, protein S19 forms a complex with S13 that binds strongly to the 16S ribosomal RNA. The chain is Small ribosomal subunit protein uS19 (rpsS) from Bacillus subtilis (strain 168).